The following is a 283-amino-acid chain: Putative pyruvate, phosphate dikinase regulatory protein (283 aa).

Position 154–161 (154–161 (GVSRTSKT)) interacts with ADP.

The protein belongs to the pyruvate, phosphate/water dikinase regulatory protein family. PDRP subfamily.

It carries out the reaction N(tele)-phospho-L-histidyl/L-threonyl-[pyruvate, phosphate dikinase] + ADP = N(tele)-phospho-L-histidyl/O-phospho-L-threonyl-[pyruvate, phosphate dikinase] + AMP + H(+). It catalyses the reaction N(tele)-phospho-L-histidyl/O-phospho-L-threonyl-[pyruvate, phosphate dikinase] + phosphate + H(+) = N(tele)-phospho-L-histidyl/L-threonyl-[pyruvate, phosphate dikinase] + diphosphate. In terms of biological role, bifunctional serine/threonine kinase and phosphorylase involved in the regulation of the pyruvate, phosphate dikinase (PPDK) by catalyzing its phosphorylation/dephosphorylation. This chain is Putative pyruvate, phosphate dikinase regulatory protein, found in Afipia carboxidovorans (strain ATCC 49405 / DSM 1227 / KCTC 32145 / OM5) (Oligotropha carboxidovorans).